Reading from the N-terminus, the 157-residue chain is MVSVQTIATIVVKTFKIVLNIIILVLYRTGYNGEFLGVGGTWNLNEEKNPDAEIVASGVIVGYLIYTLVQIVTFLFGTTEHKRALSEIVMNFVGVFLWIAVGAVALHYWGGYQGEHQFQFVFAEKQVGLAVGALCVINGAIYLLDTALSVIHFTKEM.

At 2 to 6 (VSVQT) the chain is on the cytoplasmic side. The helical transmembrane segment at 7–27 (IATIVVKTFKIVLNIIILVLY) threads the bilayer. At 28–53 (RTGYNGEFLGVGGTWNLNEEKNPDAE) the chain is on the extracellular side. A helical transmembrane segment spans residues 54–74 (IVASGVIVGYLIYTLVQIVTF). Topologically, residues 75-87 (LFGTTEHKRALSE) are cytoplasmic. The chain crosses the membrane as a helical span at residues 88–108 (IVMNFVGVFLWIAVGAVALHY). Residues 109–130 (WGGYQGEHQFQFVFAEKQVGLA) are Extracellular-facing. The chain crosses the membrane as a helical span at residues 131–151 (VGALCVINGAIYLLDTALSVI). Topologically, residues 152–157 (HFTKEM) are cytoplasmic.

As to expression, expressed in midgut epithelium (at protein level).

It is found in the apicolateral cell membrane. It localises to the cell junction. The protein resides in the septate junction. Its function is as follows. Required for assembly of smooth septate junctions (sSJs). May be important for barrier function of the midgut epithelium. In Bombyx mori (Silk moth), this protein is Protein snakeskin.